The sequence spans 219 residues: Thymidylate kinase (219 aa).

7–14 (GIDGCGKT) provides a ligand contact to ATP.

This sequence belongs to the thymidylate kinase family.

The enzyme catalyses dTMP + ATP = dTDP + ADP. Functionally, phosphorylation of dTMP to form dTDP in both de novo and salvage pathways of dTTP synthesis. This Anaplasma phagocytophilum (strain HZ) protein is Thymidylate kinase.